A 455-amino-acid polypeptide reads, in one-letter code: Gastric inhibitory polypeptide receptor (455 aa).

A signal peptide spans 1–18 (MPLRLLLLLLWLWGLSLQ). The Extracellular portion of the chain corresponds to 19 to 135 (RAETDSEGQT…DQKLILERLQ (117 aa)). 3 cysteine pairs are disulfide-bonded: C43/C67, C58/C100, and C81/C115. N-linked (GlcNAc...) asparagine glycosylation is found at N59, N69, and N74. Residues 136 to 158 (VVYTVGYSLSLATLLLALLILSL) form a helical membrane-spanning segment. Over 159-166 (FRRLHCTR) the chain is Cytoplasmic. Residues 167 to 186 (NYIHMNLFTSFMLRAGAILT) form a helical membrane-spanning segment. The Extracellular segment spans residues 187–214 (RDQLLPPLGPYTGNQTPTLWNQALAACR). A helical transmembrane segment spans residues 215–239 (TAQILTQYCVGANYTWLLVEGVYLH). Residues 240 to 251 (HLLVVVRRSEKG) lie on the Cytoplasmic side of the membrane. Residues 252–275 (HFRCYLLLGWGAPALFVIPWVIVR) traverse the membrane as a helical segment. Over 276–290 (YLYENTQCWERNEVK) the chain is Extracellular. The helical transmembrane segment at 291–316 (AIWWIIRTPILITILINFLIFIRILG) threads the bilayer. At 317 to 338 (ILVSKLRTRQMRCPDYRLRLAR) the chain is on the cytoplasmic side. Residues 339–359 (STLTLMPLLGVHEVVFAPVTE) traverse the membrane as a helical segment. Topologically, residues 360–374 (EQAEGSLRFAKLAFE) are extracellular. Residues 375–395 (IFLSSFQGFLVSVLYCFINKE) form a helical membrane-spanning segment. At 396 to 455 (VQSEIRRLRLSLQEQCPRPHLGQAPRAVPLSSAPQEAAIRNALPSGMLHVPGDEVLESYC) the chain is on the cytoplasmic side.

The protein belongs to the G-protein coupled receptor 2 family. As to quaternary structure, may form homodimers and heterodimers with GLP1R. N-glycosylation is required for cell surface expression and lengthens receptor half-life by preventing degradation in the ER. In terms of tissue distribution, present in the pancreas as well as the gut, adipose tissue, heart, pituitary, and inner layers of the adrenal cortex, whereas it is not found in kidney, spleen, or liver. It is also expressed in several brain regions, including the cerebral cortex, hippocampus, and olfactory bulb.

It is found in the cell membrane. This is a receptor for GIP. The activity of this receptor is mediated by G proteins which activate adenylyl cyclase. In Rattus norvegicus (Rat), this protein is Gastric inhibitory polypeptide receptor (Gipr).